The sequence spans 430 residues: Ribosomal protein uS12 methylthiotransferase RimO (430 aa).

The MTTase N-terminal domain occupies 1 to 116 (MRVGIKVLGC…IANALEKGTD (116 aa)). [4Fe-4S] cluster is bound by residues cysteine 10, cysteine 46, cysteine 79, cysteine 148, cysteine 152, and cysteine 155. Positions 134–365 (LEERPYAYVK…LLQAEISNSR (232 aa)) constitute a Radical SAM core domain. In terms of domain architecture, TRAM spans 367–430 (DRFIGRKLKF…DEYDMWGSVT (64 aa)).

It belongs to the methylthiotransferase family. RimO subfamily. It depends on [4Fe-4S] cluster as a cofactor.

It is found in the cytoplasm. The catalysed reaction is L-aspartate(89)-[ribosomal protein uS12]-hydrogen + (sulfur carrier)-SH + AH2 + 2 S-adenosyl-L-methionine = 3-methylsulfanyl-L-aspartate(89)-[ribosomal protein uS12]-hydrogen + (sulfur carrier)-H + 5'-deoxyadenosine + L-methionine + A + S-adenosyl-L-homocysteine + 2 H(+). Functionally, catalyzes the methylthiolation of an aspartic acid residue of ribosomal protein uS12. In Thermotoga sp. (strain RQ2), this protein is Ribosomal protein uS12 methylthiotransferase RimO.